The sequence spans 323 residues: L-lactate dehydrogenase (323 aa).

NAD(+) contacts are provided by residues Val-18, Asp-39, Tyr-69, and 83 to 84; that span reads GA. Substrate is bound by residues Gln-86 and Arg-92. Residues Ser-105, 122-124, and Ser-147 contribute to the NAD(+) site; that span reads VAN. 124–127 lines the substrate pocket; the sequence is NPVD. 152–155 contributes to the substrate binding site; sequence DTGR. His-179 acts as the Proton acceptor in catalysis. Tyr-223 is subject to Phosphotyrosine. Residue Thr-232 coordinates substrate.

The protein belongs to the LDH/MDH superfamily. LDH family. In terms of assembly, homotetramer.

The protein resides in the cytoplasm. It catalyses the reaction (S)-lactate + NAD(+) = pyruvate + NADH + H(+). The protein operates within fermentation; pyruvate fermentation to lactate; (S)-lactate from pyruvate: step 1/1. With respect to regulation, under neutral conditions, the reaction is stimulated 4-fold by fructose 1,6-bisphosphate (FBP), however the L-lactate dehydrogenase is a nonallosteric enzyme. Calcium and zinc ions at 1 mM stimulate the activity almost 2-fold. Weakly inhibited by cadmium, cobalt and copper ions. In terms of biological role, catalyzes the conversion of lactate to pyruvate. This is L-lactate dehydrogenase from Lactobacillus helveticus (Lactobacillus suntoryeus).